The chain runs to 99 residues: Large ribosomal subunit protein uL23 (99 aa).

As to quaternary structure, contacts protein L29, and trigger factor when it is bound to the ribosome. Part of the 50S ribosomal subunit.

Its function is as follows. One of the early assembly proteins it binds 23S rRNA. One of the proteins that surrounds the polypeptide exit tunnel on the outside of the ribosome. Forms the main docking site for trigger factor binding to the ribosome. The polypeptide is Large ribosomal subunit protein uL23 (Rhodopseudomonas palustris (strain ATCC BAA-98 / CGA009)).